Consider the following 322-residue polypeptide: Interferon regulatory factor 1 (322 aa).

Residues 5–113 (RMRMRPWLEM…SAVRVYRMLP (109 aa)) constitute a DNA-binding region (IRF tryptophan pentad repeat). Lys-78 is subject to N6-acetyllysine. Residues 92-164 (EEVKDQSRNK…STLPDDHSSY (73 aa)) form a disordered region. A compositionally biased stretch (polar residues) spans 141 to 157 (GESSPDTFSDGLSSSTL). Glycyl lysine isopeptide (Lys-Gly) (interchain with G-Cter in SUMO) cross-links involve residues Lys-276 and Lys-296.

This sequence belongs to the IRF family. In terms of assembly, monomer. Homodimer. Interacts with EP300. Interacts with MYD88. Interacts with PIAS3. Interacts with SPOP. Post-translationally, phosphorylated by CK2 and this positively regulates its activity. In terms of processing, sumoylation represses the transcriptional activity and displays enhanced resistance to protein degradation. Sumoylated by UBE2I/UBC9 and SUMO1. Inactivates the tumor suppressor activity. Elevated levels in tumor cells. Major site is Lys-276. Sumoylation is enhanced by PIAS3. Desumoylated by SENP1 in tumor cells and appears to compete with ubiquitination on C-terminal sites. Ubiquitinated in a SPOP-depedent manner. Appears to compete with sumoylation on C-terminal sites.

The protein resides in the nucleus. It localises to the cytoplasm. Its activity is regulated as follows. Activated by MYD88. In terms of biological role, transcriptional regulator which displays a remarkable functional diversity in the regulation of cellular responses. Regulates transcription of IFN and IFN-inducible genes, host response to viral and bacterial infections, regulation of many genes expressed during hematopoiesis, inflammation, immune responses and cell proliferation and differentiation, regulation of the cell cycle and induction of growth arrest and programmed cell death following DNA damage. Stimulates both innate and acquired immune responses through the activation of specific target genes and can act as a transcriptional activator and repressor regulating target genes by binding to an interferon-stimulated response element (ISRE) in their promoters. Has an essentail role in IFNG-dependent immunity to mycobacteria. Binds to a consensus sequence in gene promoters. Its target genes for transcriptional activation activity include: genes involved in anti-viral response, such as IFN-alpha/beta, RIGI, TNFSF10/TRAIL, ZBP1, OAS1/2, PIAS1/GBP, EIF2AK2/PKR and RSAD2/viperin; antibacterial response, such as GBP2, GBP5 and NOS2/INOS; anti-proliferative response, such as p53/TP53, LOX and CDKN1A; apoptosis, such as BBC3/PUMA, CASP1, CASP7 and CASP8; immune response, such as IL7, IL12A/B and IL15, PTGS2/COX2 and CYBB; DNA damage responses and DNA repair, such as POLQ/POLH; MHC class I expression, such as TAP1, PSMB9/LMP2, PSME1/PA28A, PSME2/PA28B and B2M and MHC class II expression, such as CIITA; metabolic enzymes, such as ACOD1/IRG1. Represses genes involved in anti-proliferative response, such as BIRC5/survivin, CCNB1, CCNE1, CDK1, CDK2 and CDK4 and in immune response, such as FOXP3, IL4, ANXA2 and TLR4. Stimulates p53/TP53-dependent transcription through enhanced recruitment of EP300 leading to increased acetylation of p53/TP53. Plays an important role in immune response directly affecting NK maturation and activity, macrophage production of IL12, Th1 development and maturation of CD8+ T-cells. Also implicated in the differentiation and maturation of dendritic cells and in the suppression of regulatory T (Treg) cells development. Acts as a tumor suppressor and plays a role not only in antagonism of tumor cell growth but also in stimulating an immune response against tumor cells. The polypeptide is Interferon regulatory factor 1 (IRF1) (Sus scrofa (Pig)).